Consider the following 300-residue polypeptide: 33 kDa chaperonin (300 aa).

2 disulfide bridges follow: Cys-235/Cys-237 and Cys-269/Cys-272.

This sequence belongs to the HSP33 family. Post-translationally, under oxidizing conditions two disulfide bonds are formed involving the reactive cysteines. Under reducing conditions zinc is bound to the reactive cysteines and the protein is inactive.

The protein resides in the cytoplasm. Redox regulated molecular chaperone. Protects both thermally unfolding and oxidatively damaged proteins from irreversible aggregation. Plays an important role in the bacterial defense system toward oxidative stress. The sequence is that of 33 kDa chaperonin from Pseudomonas fluorescens (strain Pf0-1).